Here is a 509-residue protein sequence, read N- to C-terminus: Scavenger receptor class B member 1 (509 aa).

The Cytoplasmic portion of the chain corresponds to 1–11 (MGGSSRARWVA). A helical membrane pass occupies residues 12–32 (LGLGALGLLFAALGVVMILMV). The Extracellular segment spans residues 33–440 (PSLIKQQVLK…YTQLVLMPQV (408 aa)). 11 N-linked (GlcNAc...) asparagine glycosylation sites follow: asparagine 102, asparagine 108, asparagine 116, asparagine 173, asparagine 212, asparagine 227, asparagine 255, asparagine 288, asparagine 310, asparagine 330, and asparagine 383. A disulfide bridge connects residues cysteine 251 and cysteine 384. The chain crosses the membrane as a helical span at residues 441–461 (LHYAQYVLLGLGGLLLLVPII). Residue cysteine 462 is the site of S-palmitoyl cysteine attachment. Over 462-509 (CQLRSQEKCFLFWSGSKKGSQDKEAIQAYSESLMSPAAKGTVLQEAKL) the chain is Cytoplasmic.

Belongs to the CD36 family. The C-terminal region binds to PDZK1. In terms of processing, N-glycosylated. Post-translationally, the six cysteines of the extracellular domain are all involved in intramolecular disulfide bonds. As to expression, expressed primarily in liver, ovary and adrenal gland, and, at lower levels in other non-placental steroidogenic tissues, including adipose tissue, mammary gland and testis (at protein level). Isoform 2 is expressed at lower levels than isoform 1 in liver, testis and adrenal gland. At the mRNA, but not at the protein level, isoform 2 is the predominant isoform in testis (80%).

It localises to the cell membrane. It is found in the membrane. The protein resides in the caveola. Receptor for different ligands such as phospholipids, cholesterol ester, lipoproteins, phosphatidylserine and apoptotic cells. Both isoform 1 and isoform 2 act as receptors for HDL, mediating selective uptake of cholesteryl ether and HDL-dependent cholesterol efflux. Also facilitates the flux of free and esterified cholesterol between the cell surface and apoB-containing lipoproteins and modified lipoproteins, although less efficiently than HDL. May be involved in the phagocytosis of apoptotic cells, via its phosphatidylserine binding activity. This is Scavenger receptor class B member 1 (Scarb1) from Mus musculus (Mouse).